Reading from the N-terminus, the 473-residue chain is Allene oxide synthase CYP74A2 (473 aa).

3 residues coordinate heme b: lysine 88, histidine 119, and lysine 123. The (13S)-hydroperoxy-(9Z,11E)-octadecadienoate site is built by serine 199 and lysine 282. Heme b contacts are provided by lysine 424 and cysteine 426.

It belongs to the cytochrome P450 family. Heme b serves as cofactor.

The enzyme catalyses (13S)-hydroperoxy-(9Z,11E,15Z)-octadecatrienoate = (9Z,13S,15Z)-12,13-epoxyoctadeca-9,11,15-trienoate + H2O. It carries out the reaction (13S)-hydroperoxy-(9Z,11E)-octadecadienoate = (9Z,13S)-12,13-epoxyoctadeca-9,11-dienoate + H2O. It functions in the pathway lipid metabolism; oxylipin biosynthesis. In terms of biological role, cytochrome P450 enzyme involved in the biosynthesis of oxylipin jasmonates, important phytohormones acting as growth regulators and signaling molecules for plant defense. Functions as an allene oxide synthase that converts hydroperoxy fatty acids to unstable allene epoxides. Catalyzes the dehydration of 13-HPOTE ((13S)-hydroperoxy-(9Z,11E,15Z)-octadecatrienoate). Also catalyzes the dehydration of 13-HPODE ((13S)-hydroperoxy-(9Z,11E)-octadecadienoate). The protein is Allene oxide synthase CYP74A2 of Parthenium argentatum (Guayule rubber plant).